A 70-amino-acid chain; its full sequence is DNA-directed RNA polymerase subunit omega (70 aa).

Belongs to the RNA polymerase subunit omega family. The RNAP catalytic core consists of 2 alpha, 1 beta, 1 beta' and 1 omega subunit. When a sigma factor is associated with the core the holoenzyme is formed, which can initiate transcription.

It catalyses the reaction RNA(n) + a ribonucleoside 5'-triphosphate = RNA(n+1) + diphosphate. Its function is as follows. Promotes RNA polymerase assembly. Latches the N- and C-terminal regions of the beta' subunit thereby facilitating its interaction with the beta and alpha subunits. This chain is DNA-directed RNA polymerase subunit omega, found in Staphylococcus haemolyticus (strain JCSC1435).